The following is a 195-amino-acid chain: MRFCFFFFCFTASIFCTTGNSSDIVFCCAHTPCLLHLEVDQETSVTWIDSNTGQIPLCLSNGTCHISEKGLHFSANFSKDGLYIAIINETNYHAAEHYYLVYIYENCHQMPYDSPRHTGHKGTSFNWSMGLWLVKCSHNKTFFLPFVLDSAKSAPIIMTETAITIYISMIFLIVSLLTFLNVLITLNNKYKHYGV.

6 N-linked (GlcNAc...) asparagine; by host glycosylation sites follow: Asn20, Asn61, Asn76, Asn88, Asn126, and Asn139.

This is Early E3 22.2 kDa glycoprotein from Canine adenovirus serotype 1 (strain Glaxo) (CAdV-1).